A 455-amino-acid chain; its full sequence is Serine incorporator 2 (455 aa).

11 helical membrane-spanning segments follow: residues 5-27, 40-57, 96-118, 131-150, 160-182, 202-224, 239-256, 268-290, 317-339, 385-407, and 422-444; these read LGAC…ILCS, LIFT…IIML, AVYR…MLCV, GFWF…AFYI, FYFG…IDFA, YAGL…ALMF, FISL…AAVL, LLQA…SSIP, QWWD…FISL, TYSY…MTLT, and WTAV…WTLV.

It belongs to the TDE1 family.

Its subcellular location is the cell membrane. The catalysed reaction is a 1,2-diacyl-sn-glycero-3-phospho-L-serine(in) = a 1,2-diacyl-sn-glycero-3-phospho-L-serine(out). It carries out the reaction a 1,2-diacyl-sn-glycero-3-phosphocholine(in) = a 1,2-diacyl-sn-glycero-3-phosphocholine(out). It catalyses the reaction a 1,2-diacyl-sn-glycero-3-phosphoethanolamine(in) = a 1,2-diacyl-sn-glycero-3-phosphoethanolamine(out). Functionally, non-ATP-dependent, non-specific lipid transporter for phosphatidylserine, phosphatidylcholine, and phosphatidylethanolamine. Functions as a scramblase that flips lipids in both directions across the membrane. In contrast to SERINC3 and SERINC5, has no effect on HIV-1 particles infectivity. The polypeptide is Serine incorporator 2 (Homo sapiens (Human)).